The sequence spans 118 residues: Small ribosomal subunit protein uS13 (118 aa).

The tract at residues 94-118 (SLPLRGQRTKTNARTRKGPRKPIRK) is disordered.

This sequence belongs to the universal ribosomal protein uS13 family. In terms of assembly, part of the 30S ribosomal subunit. Forms a loose heterodimer with protein S19. Forms two bridges to the 50S subunit in the 70S ribosome.

Its function is as follows. Located at the top of the head of the 30S subunit, it contacts several helices of the 16S rRNA. In the 70S ribosome it contacts the 23S rRNA (bridge B1a) and protein L5 of the 50S subunit (bridge B1b), connecting the 2 subunits; these bridges are implicated in subunit movement. Contacts the tRNAs in the A and P-sites. In Shewanella violacea (strain JCM 10179 / CIP 106290 / LMG 19151 / DSS12), this protein is Small ribosomal subunit protein uS13.